Here is a 129-residue protein sequence, read N- to C-terminus: Small ribosomal subunit protein uS9 (129 aa).

The protein belongs to the universal ribosomal protein uS9 family.

This Gemmatimonas aurantiaca (strain DSM 14586 / JCM 11422 / NBRC 100505 / T-27) protein is Small ribosomal subunit protein uS9.